Consider the following 398-residue polypeptide: MKRKICKALICATLATSLWAGASTKVYAWDGKIDGTGTHAMIVTQGVSILENDLSKNEPESVRKNLEILKENMHELQLGSTYPDYDKNAYDLYQDHFWDPDTDNNFSKDNSWYLAYSIPDTGESQIRKFSALARYEWQRGNYKQATFYLGEAMHYFGDIDTPYHPANVTAVDSAGHVKFETFAEERKEQYKINTAGCKTNEDFYADILKNKDFNAWSKEYARGFAKTGKSIYYSHASMSHSWDDWDYAAKVTLANSQKGTAGYIYRFLHDVSEGNDPSVGKNVKELVAYISTSGEKDAGTDDYMYFGIKTKDGKTQEWEMDNPGNDFMTGSKDTYTFKLKDENLKIDDIQNMWIRKRKYTAFPDAYKPENIKIIANGKVVVDKDINEWISGNSTYNIK.

An N-terminal signal peptide occupies residues 1–28 (MKRKICKALICATLATSLWAGASTKVYA). Zn(2+) contacts are provided by Trp29, His39, Asp84, His96, His154, Asp158, His164, His176, and Glu180. The 250-residue stretch at 29 to 278 (WDGKIDGTGT…HDVSEGNDPS (250 aa)) folds into the Zn-dependent PLC domain. Residues 275-283 (NDPSVGKNV) are linker. The PLAT domain occupies 284 to 398 (KELVAYISTS…ISGNSTYNIK (115 aa)). Ca(2+) contacts are provided by Asp297, Gly299, Thr300, Asp301, Asp321, Asn322, Gly324, Asn325, Asp326, Asp364, and Ala365.

The protein belongs to the bacterial zinc-metallophospholipase C family. It depends on Ca(2+) as a cofactor. The cofactor is Zn(2+).

The protein resides in the secreted. The enzyme catalyses a 1,2-diacyl-sn-glycero-3-phosphocholine + H2O = phosphocholine + a 1,2-diacyl-sn-glycerol + H(+). Functionally, bacterial hemolysins are exotoxins that attack blood cell membranes and cause cell rupture. Constitutes an essential virulence factor in gas gangrene. Binds to eukaryotic membranes where it hydrolyzes both phosphatidylcholine and sphingomyelin. The diacylglycerol produced can activate both the arachidonic acid pathway, leading to modulation of the inflammatory response cascade and thrombosis, and protein kinase C, leading to activation of eukaryotic phospholipases and further membrane damage. Acts on human and mouse erythrocytes, but not on rabbit or horse erythrocytes. This Clostridium perfringens (strain 13 / Type A) protein is Phospholipase C (plc).